We begin with the raw amino-acid sequence, 343 residues long: Probable dual-specificity RNA methyltransferase RlmN (343 aa).

The active-site Proton acceptor is the Glu-83. In terms of domain architecture, Radical SAM core spans 89-323 (YLDRKTICVS…VSVRRSRGKD (235 aa)). Cys-96 and Cys-328 are disulfide-bonded. Residues Cys-103, Cys-107, and Cys-110 each coordinate [4Fe-4S] cluster. S-adenosyl-L-methionine contacts are provided by residues 153-154 (GE), Ser-185, 209-211 (SLH), and Asn-285. The S-methylcysteine intermediate role is filled by Cys-328.

Belongs to the radical SAM superfamily. RlmN family. [4Fe-4S] cluster serves as cofactor.

It is found in the cytoplasm. It carries out the reaction adenosine(2503) in 23S rRNA + 2 reduced [2Fe-2S]-[ferredoxin] + 2 S-adenosyl-L-methionine = 2-methyladenosine(2503) in 23S rRNA + 5'-deoxyadenosine + L-methionine + 2 oxidized [2Fe-2S]-[ferredoxin] + S-adenosyl-L-homocysteine. It catalyses the reaction adenosine(37) in tRNA + 2 reduced [2Fe-2S]-[ferredoxin] + 2 S-adenosyl-L-methionine = 2-methyladenosine(37) in tRNA + 5'-deoxyadenosine + L-methionine + 2 oxidized [2Fe-2S]-[ferredoxin] + S-adenosyl-L-homocysteine. In terms of biological role, specifically methylates position 2 of adenine 2503 in 23S rRNA and position 2 of adenine 37 in tRNAs. The sequence is that of Probable dual-specificity RNA methyltransferase RlmN from Deinococcus deserti (strain DSM 17065 / CIP 109153 / LMG 22923 / VCD115).